The chain runs to 1849 residues: Brefeldin A-inhibited guanine nucleotide-exchange protein 1 (1849 aa).

Residues 2 to 224 form a DCB; DCB:DCB and DCB:HUS domain interaction region; it reads YEGKKTKNMF…QEAKQMEKER (223 aa). Residues 46–58 show a composition bias toward basic and acidic residues; sequence AETEKQSPPHGEA. Disordered stretches follow at residues 46–65, 216–301, and 350–413; these read AETEKQSPPHGEAKAGSSTL, EAKQ…ADQA, and INVS…SPGA. Phosphoserine is present on residues Ser-52, Ser-286, Ser-289, and Ser-290. Composition is skewed to polar residues over residues 350 to 360 and 394 to 409; these read INVSADGNNGT and SVSSNDTQESGNSSGP. A phosphoserine mark is found at Ser-397 and Ser-410. Positions 557–577 are HUS; DCB:HUS domain interaction; that stretch reads ADAQSVVDIYVNYDCDLNAAN. The tract at residues 634–687 is disordered; the sequence is PNSQTTLGQEKPSEQETSEMKHPETINRYGSLNSLESTSSSGIGSYSTQMSGTD. Positions 644–658 are enriched in basic and acidic residues; it reads KPSEQETSEMKHPET. Over residues 664–684 the composition is skewed to low complexity; sequence SLNSLESTSSSGIGSYSTQMS. One can recognise an SEC7 domain in the interval 709–840; the sequence is FTKKPKRGIQ…IIMLTTDLHS (132 aa). Positions 711-715 match the Nuclear localization signal (NLS) motif; that stretch reads KKPKR. A phosphoserine mark is found at Ser-1079, Ser-1566, and Ser-1569.

Homodimer. Interacts with ARFGEF2/BIG2; both proteins are probably part of the same or very similar macromolecular complexes. Interacts with FKBP2. Interacts with MYO9B. Interacts with PRKAR1A and PRKAR2A. Interacts with PPP1CC. Interacts with NCL, FBL, NUP62 and U3 small nucleolar RNA. Interacts with DPY30. Interacts with PDE3A. Interacts with KANK1. Interacts with TBC1D22A and TBC1D22B. Phosphorylated. In vitro phosphorylated by PKA reducing its GEF activity and dephosphorylated by phosphatase PP1. In terms of tissue distribution, abundantly expressed in kidney, somewhat less abundant in lung, spleen, and brain, and still less abundant in heart.

Its subcellular location is the cytoplasm. It is found in the perinuclear region. It localises to the golgi apparatus. The protein resides in the trans-Golgi network. The protein localises to the nucleus. Its subcellular location is the nucleolus. It is found in the nucleus matrix. It localises to the membrane. Inhibited by brefeldin A. Its function is as follows. Promotes guanine-nucleotide exchange on ARF1 and ARF3. Promotes the activation of ARF1/ARF3 through replacement of GDP with GTP. Involved in vesicular trafficking. Required for the maintenance of Golgi structure; the function may be independent of its GEF activity. Required for the maturation of integrin beta-1 in the Golgi. Involved in the establishment and persistence of cell polarity during directed cell movement in wound healing. Proposed to act as A kinase-anchoring protein (AKAP) and may mediate crosstalk between Arf and PKA pathways. Inhibits GAP activity of MYO9B probably through competitive RhoA binding. The function in the nucleus remains to be determined. This is Brefeldin A-inhibited guanine nucleotide-exchange protein 1 (ARFGEF1) from Bos taurus (Bovine).